The primary structure comprises 228 residues: Large ribosomal subunit protein mL64 (228 aa).

Disordered stretches follow at residues 20 to 44 (PRSR…DREN) and 186 to 228 (QRKR…KPSS). The stretch at 98 to 207 (TMQESLRVQQ…KKEARIAAMA (110 aa)) forms a coiled coil. The Nuclear localization signal signature appears at 184-200 (KQQRKRLKEERQRQKKE). Basic and acidic residues predominate over residues 186–202 (QRKRLKEERQRQKKEAR). Positions 212 to 228 (QDSAEAQDSAASGKPSS) are enriched in low complexity.

The protein belongs to the mitochondrion-specific ribosomal protein mL64 family. In terms of assembly, component of the mitochondrial ribosome large subunit (39S) which comprises a 16S rRNA and about 50 distinct proteins. Interacts with GADD45A, GADD45B and GADD45G. Interacts with NR4A1 via the NR4A1 AB domain. Interacts with ATAD3A and ATAD3B.

It is found in the mitochondrion. It localises to the nucleus. Acts as a negative regulator of G1 to S cell cycle phase progression by inhibiting cyclin-dependent kinases. Inhibitory effects are additive with GADD45 proteins but also occur in the absence of GADD45 proteins. Acts as a repressor of the orphan nuclear receptor NR4A1 by inhibiting AB domain-mediated transcriptional activity. May be involved in the hormone-mediated regulation of NR4A1 transcriptional activity. May play a role in mitochondrial protein synthesis. In Rattus norvegicus (Rat), this protein is Large ribosomal subunit protein mL64 (Gadd45gip1).